The chain runs to 296 residues: Homoserine kinase (296 aa).

An ATP-binding site is contributed by 92–102; that stretch reads PQSRGLGSSAA.

The protein belongs to the GHMP kinase family. Homoserine kinase subfamily.

The protein localises to the cytoplasm. The catalysed reaction is L-homoserine + ATP = O-phospho-L-homoserine + ADP + H(+). It functions in the pathway amino-acid biosynthesis; L-threonine biosynthesis; L-threonine from L-aspartate: step 4/5. Functionally, catalyzes the ATP-dependent phosphorylation of L-homoserine to L-homoserine phosphate. The sequence is that of Homoserine kinase from Cutibacterium acnes (strain DSM 16379 / KPA171202) (Propionibacterium acnes).